The sequence spans 213 residues: Large ribosomal subunit protein bL25 (213 aa).

The protein belongs to the bacterial ribosomal protein bL25 family. CTC subfamily. In terms of assembly, part of the 50S ribosomal subunit; part of the 5S rRNA/L5/L18/L25 subcomplex. Contacts the 5S rRNA. Binds to the 5S rRNA independently of L5 and L18.

In terms of biological role, this is one of the proteins that binds to the 5S RNA in the ribosome where it forms part of the central protuberance. The polypeptide is Large ribosomal subunit protein bL25 (Mesorhizobium japonicum (strain LMG 29417 / CECT 9101 / MAFF 303099) (Mesorhizobium loti (strain MAFF 303099))).